The following is a 206-amino-acid chain: MHDLIMSMAEVDISLDIGTKAVRLARAAASSYLRNEKLPDPPADPIFQEKHGVFTTINTYPGNTLRGCIGFPEPYYPLGEGIIRSSIYAATEDPRFEPMKIDEISHVTFEVSILTQPVEITVNPEDRPKAVHIGRDGLIAVYNGASGLLLPQVATEYRMNPEEFLEALCEKAGLWEGCWKYKKVKISKFQATVFGEKDPEGVVEKR.

The AMMECR1 domain occupies 16–205 (DIGTKAVRLA…EKDPEGVVEK (190 aa)).

This chain is Protein Ta0236, found in Thermoplasma acidophilum (strain ATCC 25905 / DSM 1728 / JCM 9062 / NBRC 15155 / AMRC-C165).